The primary structure comprises 539 residues: Chaperonin GroEL (539 aa).

ATP is bound by residues 29-32 (TIGP), 86-90 (DGTTT), Gly413, 476-478 (NAA), and Asp492.

Belongs to the chaperonin (HSP60) family. In terms of assembly, forms a cylinder of 14 subunits composed of two heptameric rings stacked back-to-back. Interacts with the co-chaperonin GroES.

The protein resides in the cytoplasm. The catalysed reaction is ATP + H2O + a folded polypeptide = ADP + phosphate + an unfolded polypeptide.. In terms of biological role, together with its co-chaperonin GroES, plays an essential role in assisting protein folding. The GroEL-GroES system forms a nano-cage that allows encapsulation of the non-native substrate proteins and provides a physical environment optimized to promote and accelerate protein folding. The sequence is that of Chaperonin GroEL from Staphylococcus haemolyticus (strain JCSC1435).